Consider the following 464-residue polypeptide: ATP synthase subunit beta 2 (464 aa).

An ATP-binding site is contributed by 153 to 160 (GGAGVGKT).

This sequence belongs to the ATPase alpha/beta chains family. As to quaternary structure, F-type ATPases have 2 components, CF(1) - the catalytic core - and CF(0) - the membrane proton channel. CF(1) has five subunits: alpha(3), beta(3), gamma(1), delta(1), epsilon(1). CF(0) has three main subunits: a(1), b(2) and c(9-12). The alpha and beta chains form an alternating ring which encloses part of the gamma chain. CF(1) is attached to CF(0) by a central stalk formed by the gamma and epsilon chains, while a peripheral stalk is formed by the delta and b chains.

It localises to the cell inner membrane. The enzyme catalyses ATP + H2O + 4 H(+)(in) = ADP + phosphate + 5 H(+)(out). In terms of biological role, produces ATP from ADP in the presence of a proton gradient across the membrane. The catalytic sites are hosted primarily by the beta subunits. This is ATP synthase subunit beta 2 from Paraburkholderia xenovorans (strain LB400).